Reading from the N-terminus, the 391-residue chain is Casein kinase II subunit alpha (391 aa).

The interval 36-41 (QDDYQL) is interaction with beta subunit. The region spanning 39 to 324 (YQLVRKLGRG…AREAMEHPYF (286 aa)) is the Protein kinase domain. ATP contacts are provided by residues 45-53 (LGRGKYSEV) and K68. Catalysis depends on D156, which acts as the Proton acceptor. 2 positions are modified to phosphothreonine; by CDK1: T344 and T360. A phosphoserine; by CDK1 mark is found at S362 and S370.

It belongs to the protein kinase superfamily. Ser/Thr protein kinase family. CK2 subfamily. In terms of assembly, heterotetramer composed of two catalytic subunits (alpha chain and/or alpha' chain) and two regulatory subunits (beta chains). The tetramer can exist as a combination of 2 alpha/2 beta, 2 alpha'/2 beta or 1 alpha/1 alpha'/2 beta subunits. Also part of a CK2-SPT16-SSRP1 complex composed of SSRP1, SUPT16H, CSNK2A1, CSNK2A2 and CSNK2B, which forms following UV irradiation. Interacts with RNPS1. Interacts with SNAI1. Interacts with PML. Interacts with CCAR2. Interacts with HIRIP3. Phosphorylated at Thr-344, Thr-360, Ser-362 and Ser-370 by CDK1 in prophase and metaphase and dephosphorylated during anaphase. Phosphorylation does not directly affect casein kinase 2 activity, but may contribute to its regulation by forming binding sites for interacting proteins and/or targeting it to different compartments.

The protein resides in the nucleus. The enzyme catalyses L-seryl-[protein] + ATP = O-phospho-L-seryl-[protein] + ADP + H(+). It carries out the reaction L-threonyl-[protein] + ATP = O-phospho-L-threonyl-[protein] + ADP + H(+). Its activity is regulated as follows. Constitutively active protein kinase whose activity is not directly affected by phosphorylation. Seems to be regulated by level of expression and localization. Its function is as follows. Catalytic subunit of a constitutively active serine/threonine-protein kinase complex that phosphorylates a large number of substrates containing acidic residues C-terminal to the phosphorylated serine or threonine. Regulates numerous cellular processes, such as cell cycle progression, apoptosis and transcription, as well as viral infection. May act as a regulatory node which integrates and coordinates numerous signals leading to an appropriate cellular response. During mitosis, functions as a component of the p53/TP53-dependent spindle assembly checkpoint (SAC) that maintains cyclin-B-CDK1 activity and G2 arrest in response to spindle damage. Also required for p53/TP53-mediated apoptosis, phosphorylating 'Ser-392' of p53/TP53 following UV irradiation. Phosphorylates a number of DNA repair proteins in response to DNA damage, such as MDC1, MRE11, RAD9A, RAD51 and HTATSF1, promoting their recruitment to DNA damage sites. Can also negatively regulate apoptosis. Phosphorylates the caspases CASP9 and CASP2 and the apoptotic regulator NOL3. Phosphorylation protects CASP9 from cleavage and activation by CASP8, and inhibits the dimerization of CASP2 and activation of CASP8. Phosphorylates YY1, protecting YY1 from cleavage by CASP7 during apoptosis. Regulates transcription by direct phosphorylation of RNA polymerases I, II, III and IV. Also phosphorylates and regulates numerous transcription factors including NF-kappa-B, STAT1, CREB1, IRF1, IRF2, ATF1, ATF4, SRF, MAX, JUN, FOS, MYC and MYB. Phosphorylates Hsp90 and its co-chaperones FKBP4 and CDC37, which is essential for chaperone function. Mediates sequential phosphorylation of FNIP1, promoting its gradual interaction with Hsp90, leading to activate both kinase and non-kinase client proteins of Hsp90. Regulates Wnt signaling by phosphorylating CTNNB1 and the transcription factor LEF1. Acts as an ectokinase that phosphorylates several extracellular proteins. Phosphorylates PML at 'Ser-565' and primes it for ubiquitin-mediated degradation. Plays an important role in the circadian clock function by phosphorylating BMAL1 at 'Ser-90' which is pivotal for its interaction with CLOCK and which controls CLOCK nuclear entry. Phosphorylates FMR1, promoting FMR1-dependent formation of a membraneless compartment. May phosphorylate histone H2A on 'Ser-1'. The polypeptide is Casein kinase II subunit alpha (Csnk2a1) (Rattus norvegicus (Rat)).